Here is a 256-residue protein sequence, read N- to C-terminus: Thiazole synthase (256 aa).

The active-site Schiff-base intermediate with DXP is Lys96. Residues Gly157, 183–184 (AG), and 205–206 (NT) each bind 1-deoxy-D-xylulose 5-phosphate.

This sequence belongs to the ThiG family. In terms of assembly, homotetramer. Forms heterodimers with either ThiH or ThiS.

It is found in the cytoplasm. It carries out the reaction [ThiS sulfur-carrier protein]-C-terminal-Gly-aminoethanethioate + 2-iminoacetate + 1-deoxy-D-xylulose 5-phosphate = [ThiS sulfur-carrier protein]-C-terminal Gly-Gly + 2-[(2R,5Z)-2-carboxy-4-methylthiazol-5(2H)-ylidene]ethyl phosphate + 2 H2O + H(+). It functions in the pathway cofactor biosynthesis; thiamine diphosphate biosynthesis. Functionally, catalyzes the rearrangement of 1-deoxy-D-xylulose 5-phosphate (DXP) to produce the thiazole phosphate moiety of thiamine. Sulfur is provided by the thiocarboxylate moiety of the carrier protein ThiS. In vitro, sulfur can be provided by H(2)S. The chain is Thiazole synthase from Bacillus cereus (strain 03BB102).